We begin with the raw amino-acid sequence, 120 residues long: Large ribosomal subunit protein uL29A (120 aa).

Residues S13 and S50 each carry the phosphoserine modification.

Belongs to the universal ribosomal protein uL29 family. Component of the large ribosomal subunit (LSU). Mature yeast ribosomes consist of a small (40S) and a large (60S) subunit. The 40S small subunit contains 1 molecule of ribosomal RNA (18S rRNA) and 33 different proteins (encoded by 57 genes). The large 60S subunit contains 3 rRNA molecules (25S, 5.8S and 5S rRNA) and 46 different proteins (encoded by 81 genes). uL29 is associated with the polypeptide exit tunnel.

Its subcellular location is the cytoplasm. Component of the ribosome, a large ribonucleoprotein complex responsible for the synthesis of proteins in the cell. The small ribosomal subunit (SSU) binds messenger RNAs (mRNAs) and translates the encoded message by selecting cognate aminoacyl-transfer RNA (tRNA) molecules. The large subunit (LSU) contains the ribosomal catalytic site termed the peptidyl transferase center (PTC), which catalyzes the formation of peptide bonds, thereby polymerizing the amino acids delivered by tRNAs into a polypeptide chain. The nascent polypeptides leave the ribosome through a tunnel in the LSU and interact with protein factors that function in enzymatic processing, targeting, and the membrane insertion of nascent chains at the exit of the ribosomal tunnel. The protein is Large ribosomal subunit protein uL29A of Saccharomyces cerevisiae (strain ATCC 204508 / S288c) (Baker's yeast).